The following is a 287-amino-acid chain: Acetylglutamate kinase (287 aa).

Residues 65–66 (GG), arginine 87, and asparagine 181 contribute to the substrate site.

The protein belongs to the acetylglutamate kinase family. ArgB subfamily.

It localises to the cytoplasm. It catalyses the reaction N-acetyl-L-glutamate + ATP = N-acetyl-L-glutamyl 5-phosphate + ADP. The protein operates within amino-acid biosynthesis; L-arginine biosynthesis; N(2)-acetyl-L-ornithine from L-glutamate: step 2/4. Functionally, catalyzes the ATP-dependent phosphorylation of N-acetyl-L-glutamate. This is Acetylglutamate kinase from Syntrophomonas wolfei subsp. wolfei (strain DSM 2245B / Goettingen).